Reading from the N-terminus, the 892-residue chain is DNA mismatch repair protein MutS (892 aa).

607 to 614 (GPNMSGKS) provides a ligand contact to ATP. Residues 833-855 (EESQLSFFGAEQSSKKQDKPALD) form a disordered region. A compositionally biased stretch (basic and acidic residues) spans 845 to 855 (SSKKQDKPALD).

It belongs to the DNA mismatch repair MutS family.

This protein is involved in the repair of mismatches in DNA. It is possible that it carries out the mismatch recognition step. This protein has a weak ATPase activity. The polypeptide is DNA mismatch repair protein MutS (Bacillus anthracis (strain A0248)).